Reading from the N-terminus, the 440-residue chain is Proline--tRNA ligase (440 aa).

It belongs to the class-II aminoacyl-tRNA synthetase family. ProS type 2 subfamily. In terms of assembly, homodimer.

The protein resides in the cytoplasm. The enzyme catalyses tRNA(Pro) + L-proline + ATP = L-prolyl-tRNA(Pro) + AMP + diphosphate. Catalyzes the attachment of proline to tRNA(Pro) in a two-step reaction: proline is first activated by ATP to form Pro-AMP and then transferred to the acceptor end of tRNA(Pro). The chain is Proline--tRNA ligase from Agrobacterium fabrum (strain C58 / ATCC 33970) (Agrobacterium tumefaciens (strain C58)).